A 394-amino-acid chain; its full sequence is Phosphoglycerate kinase (394 aa).

Substrate is bound by residues 21–23, arginine 36, 59–62, arginine 118, and arginine 151; these read DFN and HLGR. Serine 183 bears the Phosphoserine mark. Lysine 201 is an ATP binding site. Threonine 299 carries the phosphothreonine modification. ATP contacts are provided by residues glutamate 323 and 350–353; that span reads GGDS.

This sequence belongs to the phosphoglycerate kinase family. As to quaternary structure, monomer.

It localises to the cytoplasm. The catalysed reaction is (2R)-3-phosphoglycerate + ATP = (2R)-3-phospho-glyceroyl phosphate + ADP. Its pathway is carbohydrate degradation; glycolysis; pyruvate from D-glyceraldehyde 3-phosphate: step 2/5. The protein is Phosphoglycerate kinase (pgk) of Bacillus subtilis (strain 168).